A 391-amino-acid polypeptide reads, in one-letter code: tRNA-specific 2-thiouridylase MnmA (391 aa).

ATP is bound by residues 35–42 (GLSGGVDS) and Leu-61. The active-site Nucleophile is the Cys-122. A disulfide bridge connects residues Cys-122 and Cys-221. Gly-147 is an ATP binding site. Residues 171 to 173 (KDQ) are interaction with tRNA. Catalysis depends on Cys-221, which acts as the Cysteine persulfide intermediate. The tract at residues 328-329 (RY) is interaction with tRNA.

Belongs to the MnmA/TRMU family.

The protein resides in the cytoplasm. The catalysed reaction is S-sulfanyl-L-cysteinyl-[protein] + uridine(34) in tRNA + AH2 + ATP = 2-thiouridine(34) in tRNA + L-cysteinyl-[protein] + A + AMP + diphosphate + H(+). Its function is as follows. Catalyzes the 2-thiolation of uridine at the wobble position (U34) of tRNA, leading to the formation of s(2)U34. This is tRNA-specific 2-thiouridylase MnmA from Synechococcus sp. (strain CC9311).